The following is a 388-amino-acid chain: Deoxyuridine 5'-triphosphate nucleotidohydrolase (388 aa).

The segment covering 77–88 (EEKYDKEQHPGE) has biased composition (basic and acidic residues). Disordered regions lie at residues 77 to 96 (EEKY…SPLP) and 336 to 388 (THTP…PRHP). Acidic residues predominate over residues 351–363 (VDDDVDETEEDEK).

It belongs to the dUTPase family. Mg(2+) serves as cofactor.

The catalysed reaction is dUTP + H2O = dUMP + diphosphate + H(+). It functions in the pathway pyrimidine metabolism; dUMP biosynthesis; dUMP from dCTP (dUTP route): step 2/2. Functionally, involved in nucleotide metabolism: produces dUMP, the immediate precursor of thymidine nucleotides and decreases the intracellular concentration of dUTP to avoid uracil incorporation into viral DNA. The protein is Deoxyuridine 5'-triphosphate nucleotidohydrolase of Homo sapiens (Human).